The following is a 216-amino-acid chain: MLALAEDSTIKAIVVSQAVPGVSKAFGIIKSKRPDVLLFAGEPLEPVEMLQESADIVVSQDYLFGGYAVPWVAERMGARTLVHVSFPRHMSYPGLRVRRTVMRAACTDLGLSFAHEEAPDPVDGVSDGELEDFFHKTIVKWIKKYGKETLFYCTNDAHNRPLISALLKYGGMLIGATIFDYADALGVHYAELEDVYKIREKVEKSLVASAQRGALD.

This is an uncharacterized protein from Treponema pallidum (strain Nichols).